We begin with the raw amino-acid sequence, 237 residues long: Chalcone--flavanone isomerase 1 (237 aa).

Substrate contacts are provided by Thr-48, Asn-113, and Ser-190.

Belongs to the chalcone isomerase family.

It catalyses the reaction a chalcone = a flavanone.. It participates in secondary metabolite biosynthesis; flavonoid biosynthesis. Functionally, catalyzes the intramolecular cyclization of bicyclic chalcones into tricyclic (S)-flavanones. Responsible for the isomerization of 4,2',4',6'-tetrahydroxychalcone (also termed chalcone) into naringenin. This Fragaria ananassa (Strawberry) protein is Chalcone--flavanone isomerase 1 (CHI1).